A 367-amino-acid chain; its full sequence is Inner membrane amino-acid ABC transporter permease protein YhdY (367 aa).

The Cytoplasmic portion of the chain corresponds to 1 to 36; the sequence is MTKVLLSHPPRPASHNSSRAMVWVRKNLFSSWSNSL. Residues 37 to 57 traverse the membrane as a helical segment; the sequence is LTIGCIWLMWELIPPLLNWAF. At 58-99 the chain is on the periplasmic side; sequence LQANWVGSTRADCTKAGACWVFIHERFGQFMYGLYPHDQRWR. The chain crosses the membrane as a helical span at residues 100–120; it reads INLALLIGLVSIAPMFWKILP. The Cytoplasmic segment spans residues 121-125; sequence HRGRY. The chain crosses the membrane as a helical span at residues 126 to 146; it reads IAAWAVIYPLIVWWLMYGGFF. Over 147–162 the chain is Periplasmic; the sequence is ALERVETRQWGGLTLT. The region spanning 159–353 is the ABC transmembrane type-1 domain; it reads LTLTLIIASV…IFCFSMSRYS (195 aa). Residues 163–183 traverse the membrane as a helical segment; sequence LIIASVGIAGALPWGILLALG. Over 184 to 192 the chain is Cytoplasmic; sequence RRSHMPIVR. The helical transmembrane segment at 193 to 213 threads the bilayer; the sequence is ILSVIFIEFWRGVPLITVLFM. Over 214-233 the chain is Periplasmic; sequence SSVMLPLFMAEGTSIDKLIR. The helical transmembrane segment at 234–254 threads the bilayer; sequence ALVGVILFQSAYVAEVVRGGL. Residues 255 to 291 are Cytoplasmic-facing; that stretch reads QALPKGQYEAAESLALGYWKTQGLVILPQALKLVIPG. The helical transmembrane segment at 292 to 312 threads the bilayer; it reads LVNTIIALFKDTSLVIIIGLF. Residues 313 to 326 are Periplasmic-facing; it reads DLFSSVQQATVDPA. A helical transmembrane segment spans residues 327–347; sequence WLGMSTEGYVFAALIYWIFCF. At 348-367 the chain is on the cytoplasmic side; sequence SMSRYSQYLEKRFNTGRTPH.

It belongs to the binding-protein-dependent transport system permease family. HisMQ subfamily.

It localises to the cell inner membrane. Functionally, probably part of the binding-protein-dependent transport system YdhWXYZ for an amino acid; probably responsible for the translocation of the substrate across the membrane. In Escherichia coli (strain K12), this protein is Inner membrane amino-acid ABC transporter permease protein YhdY (yhdY).